The chain runs to 691 residues: Transcription termination factor Rho (691 aa).

Residues 48–303 are disordered; the sequence is ISDHQRGGSV…PEVDETELTE (256 aa). Residues 50-64 show a composition bias toward basic and acidic residues; sequence DHQRGGSVADRDAAE. Composition is skewed to low complexity over residues 65–92 and 105–119; these read RAAQ…PAAE and DTSA…QPQA. 2 stretches are compositionally biased toward basic and acidic residues: residues 120-158 and 188-273; these read EARE…SERR and DADR…EGGR. The 84-residue stretch at 307 to 390 folds into the Rho RNA-BD domain; sequence LQPVAGILDV…VKISSVNGQP (84 aa). ATP-binding positions include 433-438, 445-450, and R476; these read GKGQRG and KAGKTM.

This sequence belongs to the Rho family. Homohexamer. The homohexamer assembles into an open ring structure.

Its function is as follows. Facilitates transcription termination by a mechanism that involves Rho binding to the nascent RNA, activation of Rho's RNA-dependent ATPase activity, and release of the mRNA from the DNA template. This Micrococcus luteus (Micrococcus lysodeikticus) protein is Transcription termination factor Rho.